Consider the following 422-residue polypeptide: Putative polyketide beta-ketoacyl synthase 1 (422 aa).

The Ketosynthase family 3 (KS3) domain maps to 2-416 (SRRVVVTGIG…GFQSAVVLTG (415 aa)). Residues Cys169, His309, and His346 each act as for beta-ketoacyl synthase activity in the active site.

The protein belongs to the thiolase-like superfamily. Beta-ketoacyl-ACP synthases family.

Involved in developmentally regulated synthesis of a compound biosynthetically related to polyketide antibiotics which is essential for spore color in Streptomyces halstedii. The chain is Putative polyketide beta-ketoacyl synthase 1 (sch1) from Streptomyces halstedii.